The sequence spans 108 residues: Small proline-rich protein 5 (108 aa).

Residues 1–13 (MSQQKQKQCAPPQ) are compositionally biased toward low complexity. Disordered stretches follow at residues 1–24 (MSQQ…QRCP) and 73–108 (PPPQ…SKQK). Composition is skewed to pro residues over residues 14-24 (QCCPPPQQRCP) and 73-100 (PPPQ…PPPQ).

Functionally, positively regulates keratinocyte differentiation by inducing genes associated with epidermal differentiation. The polypeptide is Small proline-rich protein 5 (Homo sapiens (Human)).